The primary structure comprises 88 residues: Putative septation protein SpoVG (88 aa).

It belongs to the SpoVG family.

Its function is as follows. Could be involved in septation. This chain is Putative septation protein SpoVG, found in Caldicellulosiruptor saccharolyticus (strain ATCC 43494 / DSM 8903 / Tp8T 6331).